Reading from the N-terminus, the 484-residue chain is MEEWVEKYRPKSLNDVAGHNKTKETLIEWIESFVSGQKQKPILLAGPPGSGKTTLAYAIAKDYAYDVIELNASDKRNKDVISQVVGTAATSKSITGRRTLIVLDEVDGLSGNDDRGGVAEIIKVLKTAENPVILTANDVYKPALMTLRNNVNLINVGSVHTNSIPPVLRKIALKEGFEIDEKVIKTIASHAGGDLRAAINDLQSLATGGSLEVEDAKELPDRDSEKSIFDAMRIIMKTTHYDIATSATRDVKEELGTIEEWISENLPKEYLKYKDLANGYDYLSKSDVFLGRVFRRQYFGLWRYASALMTAGTALAKEEKYRGFTRYAPPSIFTKLSRTKGTRQKMKDILKKIALKTHTSTKRARNTLDYMVVIFESNPEVSAELVEYYELTKEEMEFLTNKTITKNIFSVIAGKKPKVEKEIPKKKKTEEVMPIIPKRPKISELPKEPLKEVIETIEKSVENADTKEKEKKDPKKQATLDSFF.

46-53 (GPPGSGKT) lines the ATP pocket. Basic and acidic residues predominate over residues 463 to 478 (NADTKEKEKKDPKKQA). Positions 463–484 (NADTKEKEKKDPKKQATLDSFF) are disordered.

This sequence belongs to the activator 1 small subunits family. RfcL subfamily. As to quaternary structure, heteromultimer composed of small subunits (RfcS) and large subunits (RfcL).

Functionally, part of the RFC clamp loader complex which loads the PCNA sliding clamp onto DNA. In Methanococcus maripaludis (strain C6 / ATCC BAA-1332), this protein is Replication factor C large subunit.